We begin with the raw amino-acid sequence, 150 residues long: Large ribosomal subunit protein bL9 (150 aa).

The protein belongs to the bacterial ribosomal protein bL9 family.

Its function is as follows. Binds to the 23S rRNA. This Photorhabdus laumondii subsp. laumondii (strain DSM 15139 / CIP 105565 / TT01) (Photorhabdus luminescens subsp. laumondii) protein is Large ribosomal subunit protein bL9.